The primary structure comprises 182 residues: MKELSKFDKEYLLGTIRDIKNFPKPGIIFKDITTLLGNAKAFKFLLDHLEDRYKDENLDFIVGIESRGFILGAALSARLNLGFVPVRKPNKLPYITISQKYSLEYGFDEVEMHIDAFDSIKNPKVLLVDDLIATGGTAKASSQLLKKLGVNLVEACFLVDLVELGGSKELKSECPVYSVLEV.

Belongs to the purine/pyrimidine phosphoribosyltransferase family. Homodimer.

It is found in the cytoplasm. It catalyses the reaction AMP + diphosphate = 5-phospho-alpha-D-ribose 1-diphosphate + adenine. It participates in purine metabolism; AMP biosynthesis via salvage pathway; AMP from adenine: step 1/1. Catalyzes a salvage reaction resulting in the formation of AMP, that is energically less costly than de novo synthesis. This chain is Adenine phosphoribosyltransferase, found in Campylobacter fetus subsp. fetus (strain 82-40).